We begin with the raw amino-acid sequence, 96 residues long: Protein Vpr (96 aa).

The segment at 1–42 (MEQAPEDQGPQREPHNEWTLELLEELKNEAVRHFPRIWLHGL) is homooligomerization. A phosphoserine; by host mark is found at Ser-79, Ser-94, and Ser-96.

This sequence belongs to the HIV-1 VPR protein family. Homooligomer, may form homodimer. Interacts with p6-gag region of the Pr55 Gag precursor protein through a (Leu-X-X)4 motif near the C-terminus of the P6gag protein. Interacts with host UNG. May interact with host RAD23A/HHR23A. Interacts with host VPRBP/DCAF1, leading to hijack the CUL4A-RBX1-DDB1-DCAF1/VPRBP complex, mediating ubiquitination of host proteins such as TERT and ZGPAT and arrest of the cell cycle in G2 phase. In terms of processing, phosphorylated on several residues by host. These phosphorylations regulate VPR activity for the nuclear import of the HIV-1 pre-integration complex.

It is found in the virion. Its subcellular location is the host nucleus. The protein localises to the host extracellular space. Its function is as follows. During virus entry, plays a role in the transport of the viral pre-integration (PIC) complex to the host nucleus. This function is crucial for viral infection of non-dividing macrophages. May act directly at the nuclear pore complex, by binding nucleoporins phenylalanine-glycine (FG)-repeat regions. In terms of biological role, during virus replication, may deplete host UNG protein, and incude G2-M cell cycle arrest. Acts by targeting specific host proteins for degradation by the 26S proteasome, through association with the cellular CUL4A-DDB1 E3 ligase complex by direct interaction with host VPRPB/DCAF-1. Cell cycle arrest reportedly occurs within hours of infection and is not blocked by antiviral agents, suggesting that it is initiated by the VPR carried into the virion. Additionally, VPR induces apoptosis in a cell cycle dependent manner suggesting that these two effects are mechanistically linked. Detected in the serum and cerebrospinal fluid of AIDS patient, VPR may also induce cell death to bystander cells. This chain is Protein Vpr, found in Homo sapiens (Human).